Reading from the N-terminus, the 120-residue chain is UPF0231 protein YacL (120 aa).

Belongs to the UPF0231 family.

The chain is UPF0231 protein YacL from Salmonella agona (strain SL483).